The following is a 231-amino-acid chain: Adenylate kinase (231 aa).

12–17 (GAGKGT) contributes to the ATP binding site. The tract at residues 32–61 (STGDMLRAAVKAKTPLGLEVKKIMESGGLV) is NMP. Residues T33, R38, 59-61 (GLV), 87-90 (GFPR), and Q94 contribute to the AMP site. Residues 124–161 (GRLIHPASGRTYHRRYNPPKVADKDDVTGEPLIQRADD) are LID. ATP is bound by residues R125 and 134 to 135 (TY). AMP-binding residues include R158 and R169. Residue G205 coordinates ATP.

The protein belongs to the adenylate kinase family. Monomer.

It localises to the cytoplasm. It catalyses the reaction AMP + ATP = 2 ADP. Its pathway is purine metabolism; AMP biosynthesis via salvage pathway; AMP from ADP: step 1/1. Its function is as follows. Catalyzes the reversible transfer of the terminal phosphate group between ATP and AMP. Plays an important role in cellular energy homeostasis and in adenine nucleotide metabolism. The sequence is that of Adenylate kinase from Coxiella burnetii (strain CbuK_Q154) (Coxiella burnetii (strain Q154)).